Consider the following 421-residue polypeptide: ATP-dependent RNA helicase RhlB (421 aa).

The short motif at 9-37 (QKFSDFALHPVVVQALEKKGFYNCTPIQA) is the Q motif element. The Helicase ATP-binding domain maps to 40-219 (LPLTLAGRDV…FEQMNNAEYV (180 aa)). Residue 53–60 (AQTGTGKT) coordinates ATP. A DEAD box motif is present at residues 165–168 (DEAD). Residues 245–390 (RLLQTLIEEE…VSKYNPDALL (146 aa)) form the Helicase C-terminal domain. The interval 390 to 421 (LSELPPPKRLSRPRTGNGPRRSGAPRNRRRTG) is disordered. Positions 405–414 (GNGPRRSGAP) are enriched in low complexity.

Belongs to the DEAD box helicase family. RhlB subfamily. In terms of assembly, component of the RNA degradosome, which is a multiprotein complex involved in RNA processing and mRNA degradation.

It is found in the cytoplasm. The enzyme catalyses ATP + H2O = ADP + phosphate + H(+). Functionally, DEAD-box RNA helicase involved in RNA degradation. Has RNA-dependent ATPase activity and unwinds double-stranded RNA. This Cronobacter sakazakii (strain ATCC BAA-894) (Enterobacter sakazakii) protein is ATP-dependent RNA helicase RhlB.